A 161-amino-acid polypeptide reads, in one-letter code: SsrA-binding protein (161 aa).

Belongs to the SmpB family.

The protein localises to the cytoplasm. Required for rescue of stalled ribosomes mediated by trans-translation. Binds to transfer-messenger RNA (tmRNA), required for stable association of tmRNA with ribosomes. tmRNA and SmpB together mimic tRNA shape, replacing the anticodon stem-loop with SmpB. tmRNA is encoded by the ssrA gene; the 2 termini fold to resemble tRNA(Ala) and it encodes a 'tag peptide', a short internal open reading frame. During trans-translation Ala-aminoacylated tmRNA acts like a tRNA, entering the A-site of stalled ribosomes, displacing the stalled mRNA. The ribosome then switches to translate the ORF on the tmRNA; the nascent peptide is terminated with the 'tag peptide' encoded by the tmRNA and targeted for degradation. The ribosome is freed to recommence translation, which seems to be the essential function of trans-translation. This is SsrA-binding protein from Vesicomyosocius okutanii subsp. Calyptogena okutanii (strain HA).